The following is an 859-amino-acid chain: MALLSSSLSSQIPTGAHHLTLNAYANTQCIPHFFSTLNAGTSAGKRSSLYLRWGKGSNKIIACVGEDSLSAPTLVKREFPPGFWKDHVIDSLTSSHKVAASDEKRIETLISEIKNMFRSMGYGDTNPSAYDTAWVARIPAVDGSEQPEFPETLEWILQNQLKDGSWGEGFYFLAYDRILATLACIITLTLWRTGEIQVQKGIEFFKTQAGKIEDEADSHRPSGFEIVFPAMLKEAKVLGLDLPYELPFIKQIIEKREAKLERLPTNILYALPTTLLYSLEGLQEIVDWQKIIKLQSKDGSFLSSPASTAAVFMRTGNKKCLEFLNFVLKKFGNHVPCHYPLDLFERLWAVDTIERLGIDRHFKEEIKDALDYVYSHWDERGIGWARENPVPDIDDTAMGLRILRLHGYNVSSDVLKTFRDENGEFFCFLGQTQRGVTDMLNVNRCSHVAFPGETIMEEAKTCTERYLRNALEDVGAFDKWALKKNIRGEVEYALKYPWHRSMPRLEARSYIEHYGPNDVWLGKTMYMMPYISNEKYLELAKLDFNHVQSLHQKELRDLRRWWTSSGFTELKFTRERVTEIYFSPASFMFEPEFATCRAVYTKTSNFTVILDDLYDAHGTLDDLKLFSDSVKKWDLSLVDRMPQDMKICFMGFYNTFNEIAEEGRKRQGRDVLGYIRNVWEIQLEAYTKEAEWSAARYVPSFDEYIDNASVSIALGTVVLISALFTGEILTDDVLSKIGRGSRFLQLMGLTGRLVNDTKTYEAERGQGEVASAVQCYMKDHPEISEEEALKHVYTVMENALDELNREFVNNREVPDSCRRLVFETARIMQLFYMDGDGLTLSHETEIKEHVKNCLFQPVA.

A chloroplast-targeting transit peptide spans 1-70 (MALLSSSLSS…IACVGEDSLS (70 aa)). Lys259 is a binding site for substrate. Positions 392 and 394 each coordinate Mg(2+). A DXDD motif motif is present at residues 392 to 395 (DIDD). Lys479 contacts substrate. Asp611, Asp615, Asn755, Thr759, and Glu763 together coordinate Mg(2+). A DDXXD motif motif is present at residues 611-615 (DDLYD).

The protein belongs to the terpene synthase family. Tpsd subfamily. It depends on Mg(2+) as a cofactor.

It localises to the plastid. Its subcellular location is the chloroplast. The catalysed reaction is (2E,6E,10E)-geranylgeranyl diphosphate = (+)-copalyl diphosphate. The enzyme catalyses (+)-copalyl diphosphate = abieta-8(14),12-diene + diphosphate. The protein operates within terpene metabolism; oleoresin biosynthesis. Involved in defensive oleoresin formation in conifers in response to insect attack or other injury. Involved in diterpene (C20) olefins biosynthesis. Bifunctional enzyme that catalyzes two sequential cyclizations of geranylgeranyl diphosphate (GGPP) to levopimaradiene. Levopimaradiene is the major products of the enzyme followed by abietadiene, neoabietadiene and palustradiene. This is Bifunctional levopimaradiene synthase, chloroplastic (TPS-LAS) from Picea abies (Norway spruce).